Here is a 476-residue protein sequence, read N- to C-terminus: MVDEVLKIESLDLEARGIARRDGKVVFVEGALPGERVYAATVRRKPSYEIARVETVLTPSSQRVEPRCPHFGVCGGCAMQHLEPTSQVAIKQRALEDTFWHVGKIRPQRVLPPLHGPTWGYRYRARLSVRVVPKKGGVLVGFHERKSSYVADMRECHVLPRHVSDLLLPLRAMIAALSRPERIPQIEVALGEGVTALVLRHIEPLNDHDITVLRDFAARHNVQWWLQSKGPDTVHPLDPAHGDTLAYTMPEFGLRMPYRPTDFTQVNHAINRSMVSRALKLLEVQPTDRVADLFCGLGNFTLPLATQGREAVGVEGSKALTDRALEAAARHGLEGRTRFATLNLFEVDVSWLRGLGYFDRMLIDPPREGAHAVAQALSQLTPAERPRRIVYVSCNPATLARDAAIMVHEGGYVLKAAGVINMFPHTGHVESIAVFESLADDEVLHVQQQARLKAELAAQEAAEATVQAGAASEQPA.

The TRAM domain maps to 1–55 (MVDEVLKIESLDLEARGIARRDGKVVFVEGALPGERVYAATVRRKPSYEIARVET). The [4Fe-4S] cluster site is built by Cys68, Cys74, Cys77, and Cys156. Gln265, Phe294, Asn299, Glu315, Asn343, and Asp364 together coordinate S-adenosyl-L-methionine. Cys394 acts as the Nucleophile in catalysis.

The protein belongs to the class I-like SAM-binding methyltransferase superfamily. RNA M5U methyltransferase family. RlmD subfamily.

The catalysed reaction is uridine(1939) in 23S rRNA + S-adenosyl-L-methionine = 5-methyluridine(1939) in 23S rRNA + S-adenosyl-L-homocysteine + H(+). Catalyzes the formation of 5-methyl-uridine at position 1939 (m5U1939) in 23S rRNA. This Bordetella avium (strain 197N) protein is 23S rRNA (uracil(1939)-C(5))-methyltransferase RlmD.